We begin with the raw amino-acid sequence, 372 residues long: tRNA-specific 2-thiouridylase MnmA (372 aa).

ATP is bound by residues 16 to 23 (GMSGGVDS) and methionine 42. Positions 102 to 104 (NPD) are interaction with target base in tRNA. Cysteine 107 serves as the catalytic Nucleophile. Cysteine 107 and cysteine 205 are disulfide-bonded. Glycine 132 lines the ATP pocket. An interaction with tRNA region spans residues 155–157 (KDQ). Catalysis depends on cysteine 205, which acts as the Cysteine persulfide intermediate. Residues 317–318 (RY) are interaction with tRNA.

This sequence belongs to the MnmA/TRMU family.

It localises to the cytoplasm. The enzyme catalyses S-sulfanyl-L-cysteinyl-[protein] + uridine(34) in tRNA + AH2 + ATP = 2-thiouridine(34) in tRNA + L-cysteinyl-[protein] + A + AMP + diphosphate + H(+). Functionally, catalyzes the 2-thiolation of uridine at the wobble position (U34) of tRNA, leading to the formation of s(2)U34. This is tRNA-specific 2-thiouridylase MnmA from Shewanella putrefaciens (strain CN-32 / ATCC BAA-453).